The chain runs to 215 residues: Oligoribonuclease (215 aa).

One can recognise an Exonuclease domain in the interval 5-170; that stretch reads LVWIDCEMTG…ADIHESIREL (166 aa). Tyr127 is a catalytic residue.

It belongs to the oligoribonuclease family.

Its subcellular location is the cytoplasm. Its function is as follows. 3'-to-5' exoribonuclease specific for small oligoribonucleotides. This Mycobacterium leprae (strain TN) protein is Oligoribonuclease.